Reading from the N-terminus, the 87-residue chain is Small ribosomal subunit protein uS15 (87 aa).

Over residues 1–19 (MEKARKEQLIREYATHEGD) the composition is skewed to basic and acidic residues. Residues 1 to 22 (MEKARKEQLIREYATHEGDTGS) are disordered.

This sequence belongs to the universal ribosomal protein uS15 family. Part of the 30S ribosomal subunit. Forms a bridge to the 50S subunit in the 70S ribosome, contacting the 23S rRNA.

In terms of biological role, one of the primary rRNA binding proteins, it binds directly to 16S rRNA where it helps nucleate assembly of the platform of the 30S subunit by binding and bridging several RNA helices of the 16S rRNA. Forms an intersubunit bridge (bridge B4) with the 23S rRNA of the 50S subunit in the ribosome. The sequence is that of Small ribosomal subunit protein uS15 from Clostridium novyi (strain NT).